The sequence spans 266 residues: Zinc finger protein CG30 (266 aa).

The RING-type zinc finger occupies 8 to 63 (CNICFSVAEIKNYFMQPIDRLTMIPVLELDTCKHQLCSMCIRKIRKRKKTPCPLCR).

Its subcellular location is the host nucleus. Plays a role in the proper expression of late and very late genes. The polypeptide is Zinc finger protein CG30 (CG30) (Bombyx mori nuclear polyhedrosis virus (BmNPV)).